The sequence spans 391 residues: Tryptophan synthase beta chain 2 (391 aa).

Lys83 carries the post-translational modification N6-(pyridoxal phosphate)lysine.

It belongs to the TrpB family. In terms of assembly, tetramer of two alpha and two beta chains. Requires pyridoxal 5'-phosphate as cofactor.

It catalyses the reaction (1S,2R)-1-C-(indol-3-yl)glycerol 3-phosphate + L-serine = D-glyceraldehyde 3-phosphate + L-tryptophan + H2O. The protein operates within amino-acid biosynthesis; L-tryptophan biosynthesis; L-tryptophan from chorismate: step 5/5. The beta subunit is responsible for the synthesis of L-tryptophan from indole and L-serine. This is Tryptophan synthase beta chain 2 (trpB2) from Chlamydia caviae (strain ATCC VR-813 / DSM 19441 / 03DC25 / GPIC) (Chlamydophila caviae).